A 416-amino-acid polypeptide reads, in one-letter code: MSDSGLLALQPWIRELILGSETLSSPRTGQLLKVLQDSETPGPSSAPDTPDTGAVLLVSDGTHSVRCVVTRNAIDTSDWEEKELGFRGTEGRLLLLQACGLRVQVAQDHAPAEFYLQVDRFNLLPTEQPRIQVTGCNQDSDVQRKLNECLEDHLSESASSSAGLTLSQLLDEVREDQDHRGALVCLAKSCLVLKGPCTTTPLTDWITSGSQALGKAVFTVSGSLLHIPEGEEQILSSTGSSQKARGTSASPSHMPLEESGASVSLLSALATSDPGQMDSSQSPPAVGSTSPRAQAPTSPPCNSTPSSLLLNCSPSLSPLHPAPRSHQSCETRAQAPKLEFQCSFKKRQLLPRTSAQELCSVWEPPERHRDTSAFQYKYETPSASLHTQVQTARLSPQLVAWALNIVMESESELTQV.

Residues 11 to 13 (PWI) carry the PWI motif. Ser25 is modified (phosphoserine). The segment at 156–245 (ESASSSAGLT…SSTGSSQKAR (90 aa)) is interaction with POT1. The segment covering 234 to 251 (ILSSTGSSQKARGTSASP) has biased composition (polar residues). The segment at 234–306 (ILSSTGSSQK…TSPPCNSTPS (73 aa)) is disordered. The segment covering 259–272 (SGASVSLLSALATS) has biased composition (low complexity). A compositionally biased stretch (polar residues) spans 273–292 (DPGQMDSSQSPPAVGSTSPR). Phosphoserine occurs at positions 313 and 317. Residue Lys345 forms a Glycyl lysine isopeptide (Lys-Gly) (interchain with G-Cter in SUMO2) linkage.

As to quaternary structure, component of the shelterin complex (telosome) composed of TERF1, TERF2, TINF2, TERF2IP ACD and POT1. Forms heterodimers with POT1. Identified in a complex with POT1 and single-stranded telomeric DNA. Interacts with STN1 and TINF2. Ubiquitous.

It localises to the nucleus. It is found in the chromosome. The protein localises to the telomere. In terms of biological role, component of the shelterin complex (telosome) that is involved in the regulation of telomere length and protection. Shelterin associates with arrays of double-stranded TTAGGG repeats added by telomerase and protects chromosome ends. Without its protective activity, telomeres are no longer hidden from the DNA damage surveillance and chromosome ends are inappropriately processed by DNA repair pathways. Promotes binding of POT1 to single-stranded telomeric DNA. Modulates the inhibitory effects of POT1 on telomere elongation. The ACD-POT1 heterodimer enhances telomere elongation by recruiting telomerase to telomeres and increasing its processivity. May play a role in organogenesis. The protein is Adrenocortical dysplasia protein of Mus musculus (Mouse).